Consider the following 185-residue polypeptide: TATA-box-binding protein (185 aa).

2 consecutive repeat copies span residues 8–84 (IENI…VEML) and 99–175 (IQNM…LHEL).

Belongs to the TBP family.

Its function is as follows. General factor that plays a role in the activation of archaeal genes transcribed by RNA polymerase. Binds specifically to the TATA box promoter element which lies close to the position of transcription initiation. The chain is TATA-box-binding protein from Thermococcus sibiricus (strain DSM 12597 / MM 739).